A 310-amino-acid chain; its full sequence is tRNA dimethylallyltransferase (310 aa).

13-20 (GPTASGKT) contributes to the ATP binding site. Residue 15–20 (TASGKT) participates in substrate binding. Interaction with substrate tRNA regions lie at residues 38–41 (DSAL), 162–166 (QRLSR), 243–248 (RCVGYR), and 276–283 (KRQITWLR).

It belongs to the IPP transferase family. As to quaternary structure, monomer. Mg(2+) serves as cofactor.

It carries out the reaction adenosine(37) in tRNA + dimethylallyl diphosphate = N(6)-dimethylallyladenosine(37) in tRNA + diphosphate. Catalyzes the transfer of a dimethylallyl group onto the adenine at position 37 in tRNAs that read codons beginning with uridine, leading to the formation of N6-(dimethylallyl)adenosine (i(6)A). The chain is tRNA dimethylallyltransferase from Vibrio atlanticus (strain LGP32) (Vibrio splendidus (strain Mel32)).